The primary structure comprises 136 residues: ATP synthase F(0) complex subunit C1, mitochondrial (136 aa).

The N-terminal 61 residues, 1–61 (MQTTGALLIS…REFQTSVVSR (61 aa)), are a transit peptide targeting the mitochondrion. Residues 77 to 97 (VGVAGSGAGIGTVFGSLIIGY) form a helical membrane-spanning segment. Lys-104 is modified (N6,N6,N6-trimethyllysine). Residues 112 to 132 (ILGFALSEAMGLFCLMVAFLI) traverse the membrane as a helical segment.

It belongs to the ATPase C chain family. In terms of assembly, homooctamer; the c-ring consists of eight c subunits forming a circle, and each subunit adopts a hairpin shape. Component of the ATP synthase complex composed at least of ATP5F1A/subunit alpha, ATP5F1B/subunit beta, ATP5MC1/subunit c (homooctomer), MT-ATP6/subunit a, MT-ATP8/subunit 8, ATP5ME/subunit e, ATP5MF/subunit f, ATP5MG/subunit g, ATP5MK/subunit k, ATP5MJ/subunit j, ATP5F1C/subunit gamma, ATP5F1D/subunit delta, ATP5F1E/subunit epsilon, ATP5PF/subunit F6, ATP5PB/subunit b, ATP5PD/subunit d, ATP5PO/subunit OSCP. ATP synthase complex consists of a soluble F(1) head domain (subunits alpha(3) and beta(3)) - the catalytic core - and a membrane F(0) domain - the membrane proton channel (subunits c, a, 8, e, f, g, k and j). These two domains are linked by a central stalk (subunits gamma, delta, and epsilon) rotating inside the F1 region and a stationary peripheral stalk (subunits F6, b, d, and OSCP). Interacts with TMEM70 (homooligomer form); this interaction facilitates the oligomer formation of subunit c/ATP5MC1 (c-ring) and the c-ring membrane insertion and also protects ATP5MC1 against intramitochondrial proteolysis. Post-translationally, trimethylated by ATPSCKMT at Lys-104. Methylation is required for proper incorporation of the C subunit into the ATP synthase complex and mitochondrial respiration.

Its subcellular location is the mitochondrion membrane. It catalyses the reaction H(+)(in) = H(+)(out). In terms of biological role, subunit c, of the mitochondrial membrane ATP synthase complex (F(1)F(0) ATP synthase or Complex V) that produces ATP from ADP in the presence of a proton gradient across the membrane which is generated by electron transport complexes of the respiratory chain. ATP synthase complex consist of a soluble F(1) head domain - the catalytic core - and a membrane F(1) domain - the membrane proton channel. These two domains are linked by a central stalk rotating inside the F(1) region and a stationary peripheral stalk. During catalysis, ATP synthesis in the catalytic domain of F(1) is coupled via a rotary mechanism of the central stalk subunits to proton translocation. With the subunit a (MT-ATP6), forms the proton-conducting channel in the F(0) domain, that contains two crucial half-channels (inlet and outlet) that facilitate proton movement from the mitochondrial intermembrane space (IMS) into the matrix. Protons are taken up via the inlet half-channel and released through the outlet half-channel, following a Grotthuss mechanism. The protein is ATP synthase F(0) complex subunit C1, mitochondrial of Bos taurus (Bovine).